A 131-amino-acid polypeptide reads, in one-letter code: Thioredoxin H4-1 (131 aa).

The Thioredoxin domain maps to 3–129 (SCVGKERSDE…LEKKVAALAD (127 aa)). Active-site nucleophile residues include cysteine 55 and cysteine 58. The cysteines at positions 55 and 58 are disulfide-linked.

It belongs to the thioredoxin family. Plant H-type subfamily.

Its subcellular location is the cytoplasm. In terms of biological role, probable thiol-disulfide oxidoreductase that may be involved in the redox regulation of a number of cytosolic enzymes. The sequence is that of Thioredoxin H4-1 from Oryza sativa subsp. japonica (Rice).